A 157-amino-acid polypeptide reads, in one-letter code: Ribosome maturation factor RimP (157 aa).

This sequence belongs to the RimP family.

It localises to the cytoplasm. Its function is as follows. Required for maturation of 30S ribosomal subunits. The sequence is that of Ribosome maturation factor RimP from Geobacillus sp. (strain WCH70).